The sequence spans 209 residues: MLPRHSCSLLLFLLLLPSVPMEPQPPSSTLPPFLAPEWDLLSPRVALSRGTPAGPPLLFLLEAGAYGEPAGAPANRSRRGVSETAPASRRGELAVCDAVSGWVTDRRTAVDLRGREVEVLGEVPAAGGSPLRQYFFETRCKAESAGEGGPGVGGGGCRGVDRRHWLSECKAKQSYVRALTADSQGRVGWRWIRIDTACVCTLLSRTGRA.

Residues 1 to 21 (MLPRHSCSLLLFLLLLPSVPM) form the signal peptide. Residues 22-79 (EPQPPSSTLPPFLAPEWDLLSPRVALSRGTPAGPPLLFLLEAGAYGEPAGAPANRSRR) constitute a propeptide that is removed on maturation. A glycan (N-linked (GlcNAc...) asparagine) is linked at Asn-75. Cystine bridges form between Cys-96–Cys-169, Cys-140–Cys-198, and Cys-157–Cys-200.

Belongs to the NGF-beta family. As to expression, expressed in thymus, muscle, ovary, brain, heart, stomach and kidney. Expressed in both embryo and adult tissues.

It is found in the secreted. Functionally, target-derived survival factor for peripheral sensory sympathetic neurons. May promote ameloblast differentiation and subsequent reduction in proliferation of ameloblasts. This is Neurotrophin-4 (Ntf4) from Rattus norvegicus (Rat).